We begin with the raw amino-acid sequence, 371 residues long: Histidinol-phosphate aminotransferase (371 aa).

K232 carries the N6-(pyridoxal phosphate)lysine modification.

It belongs to the class-II pyridoxal-phosphate-dependent aminotransferase family. Histidinol-phosphate aminotransferase subfamily. Homodimer. Requires pyridoxal 5'-phosphate as cofactor.

The enzyme catalyses L-histidinol phosphate + 2-oxoglutarate = 3-(imidazol-4-yl)-2-oxopropyl phosphate + L-glutamate. It functions in the pathway amino-acid biosynthesis; L-histidine biosynthesis; L-histidine from 5-phospho-alpha-D-ribose 1-diphosphate: step 7/9. In Methylibium petroleiphilum (strain ATCC BAA-1232 / LMG 22953 / PM1), this protein is Histidinol-phosphate aminotransferase.